Here is a 91-residue protein sequence, read N- to C-terminus: Alpha-defensin-related sequence 2 (91 aa).

The first 19 residues, 1-19 (MKKLVLLFALVLLAFQVQA), serve as a signal peptide directing secretion. Residues 20–58 (DSIQNTDEETKTEEQPGEKDQAVSVSFGDPQGSALQDAA) constitute a propeptide that is removed on maturation. Positions 22 to 48 (IQNTDEETKTEEQPGEKDQAVSVSFGD) are disordered. Residues 27–40 (EETKTEEQPGEKDQ) show a composition bias toward basic and acidic residues. Tandem repeats lie at residues 65-67 (CPQ), 68-70 (CPR), 71-73 (CPS), 74-76 (CPS), 77-79 (CPR), 80-82 (CPR), and 83-85 (CPR). Residues 65–85 (CPQCPRCPSCPSCPRCPRCPR) form a 7 X 3 AA tandem repeats of C-P-X region.

It belongs to the alpha-defensin family. As to expression, small bowel, spleen, colon, kidney, liver, stomach and femur marrow.

The protein localises to the secreted. Functionally, apparent precursor of a secreted, cationic, proline- and cysteine-rich peptide that contains Cys-Pro-Xaa repeats. Unlike cryptdin, the proposed mature peptide region lacks the structural motif characteristic of defensins. It may have microbicidal activities. This chain is Alpha-defensin-related sequence 2 (Defa-rs2), found in Mus musculus (Mouse).